Here is a 147-residue protein sequence, read N- to C-terminus: Transcriptional regulator MraZ (147 aa).

2 SpoVT-AbrB domains span residues 5–50 and 79–122; these read AVAL…PLTA and AQEE…SDAG.

Belongs to the MraZ family. In terms of assembly, forms oligomers.

It is found in the cytoplasm. The protein resides in the nucleoid. This is Transcriptional regulator MraZ from Azoarcus sp. (strain BH72).